The sequence spans 121 residues: UPF0045 protein sll0230 (121 aa).

Belongs to the UPF0045 family.

This is UPF0045 protein sll0230 from Synechocystis sp. (strain ATCC 27184 / PCC 6803 / Kazusa).